The sequence spans 666 residues: Probable potassium transport system protein Kup (666 aa).

Helical transmembrane passes span 16–36 (GFII…LYTM), 58–78 (ISLI…LIAL), 100–120 (PWLI…GALT), 141–161 (IYQN…VLFG), 165–185 (FGTG…FSFL), 221–241 (IFIL…YSDL), 253–273 (WPFV…WILA), 294–314 (VYLV…LISG), 343–363 (LYIP…VLYF), 373–393 (YGLA…YYLI), 399–419 (PFLA…FFWA), and 424–444 (FMHG…VMFI).

This sequence belongs to the HAK/KUP transporter (TC 2.A.72) family.

It is found in the cell membrane. It catalyses the reaction K(+)(in) + H(+)(in) = K(+)(out) + H(+)(out). Functionally, transport of potassium into the cell. Likely operates as a K(+):H(+) symporter. The chain is Probable potassium transport system protein Kup from Streptococcus pyogenes serotype M6 (strain ATCC BAA-946 / MGAS10394).